Reading from the N-terminus, the 509-residue chain is Maturase K (509 aa).

This sequence belongs to the intron maturase 2 family. MatK subfamily.

It localises to the plastid. The protein localises to the chloroplast. In terms of biological role, usually encoded in the trnK tRNA gene intron. Probably assists in splicing its own and other chloroplast group II introns. The chain is Maturase K from Vatairea macrocarpa.